The chain runs to 102 residues: Large ribosomal subunit protein uL24 (102 aa).

Belongs to the universal ribosomal protein uL24 family. Part of the 50S ribosomal subunit.

Its function is as follows. One of two assembly initiator proteins, it binds directly to the 5'-end of the 23S rRNA, where it nucleates assembly of the 50S subunit. Functionally, one of the proteins that surrounds the polypeptide exit tunnel on the outside of the subunit. The chain is Large ribosomal subunit protein uL24 from Agrobacterium fabrum (strain C58 / ATCC 33970) (Agrobacterium tumefaciens (strain C58)).